A 103-amino-acid chain; its full sequence is Phosphoribosyl-ATP pyrophosphatase (103 aa).

The protein belongs to the PRA-PH family.

It localises to the cytoplasm. It catalyses the reaction 1-(5-phospho-beta-D-ribosyl)-ATP + H2O = 1-(5-phospho-beta-D-ribosyl)-5'-AMP + diphosphate + H(+). Its pathway is amino-acid biosynthesis; L-histidine biosynthesis; L-histidine from 5-phospho-alpha-D-ribose 1-diphosphate: step 2/9. The chain is Phosphoribosyl-ATP pyrophosphatase from Listeria monocytogenes serotype 4a (strain HCC23).